Reading from the N-terminus, the 158-residue chain is Complexin-3 (158 aa).

Residues 14–47 form a disordered region; that stretch reads KNLTGSLGGGEDKGDGDKSAAEAQGMSREEYEEY. Residues 23–33 show a composition bias toward basic and acidic residues; it reads GEDKGDGDKSA. The stretch at 39-74 forms a coiled coil; it reads MSREEYEEYQKQLVEEKMERDAQFTQRKAERATLRS. Cysteine 155 is subject to Cysteine methyl ester. Cysteine 155 carries S-farnesyl cysteine lipidation. A propeptide spans 156–158 (removed in mature form); it reads HIM.

Belongs to the complexin/synaphin family. Binds to the SNARE core complex containing SNAP25, VAMP2 and STX1A. Farnesylation mediates presynaptic targeting. In terms of tissue distribution, present in many brain regions, including hippocampus and cerebellum (at protein level). Expressed in the retina (at protein level). Expressed in retinal amacrine cells (at protein level). Expressed in retinal photoreceptor ribbon synapses. Expressed in the retinal inner nuclear layer, at bipolar cells (at protein level). Expressed in cone photoreceptor synaptic terminals (at protein level).

The protein resides in the synapse. It is found in the cell membrane. Functionally, complexin that regulates SNARE protein complex-mediated synaptic vesicle fusion. Required for the maintenance of synaptic ultrastructure in the adult retina. Positively regulates synaptic transmission through synaptic vesicle availability and exocytosis of neurotransmitters at photoreceptor ribbon synapses in the retina. Suppresses tonic photoreceptor activity and baseline 'noise' by suppression of Ca(2+) vesicle tonic release and the facilitation of evoked synchronous and asynchronous Ca(2+) vesicle release. In Mus musculus (Mouse), this protein is Complexin-3 (Cplx3).